The primary structure comprises 202 residues: LexA repressor (202 aa).

Positions 28–48 (RAEIAMRLGFRSPNAAEEHLK) form a DNA-binding region, H-T-H motif. Residues Ser119 and Lys156 each act as for autocatalytic cleavage activity in the active site.

The protein belongs to the peptidase S24 family. As to quaternary structure, homodimer.

The catalysed reaction is Hydrolysis of Ala-|-Gly bond in repressor LexA.. In terms of biological role, represses a number of genes involved in the response to DNA damage (SOS response), including recA and lexA. Binds to the 16 bp palindromic sequence 5'-CTGTATATATATACAG-3'. In the presence of single-stranded DNA, RecA interacts with LexA causing an autocatalytic cleavage which disrupts the DNA-binding part of LexA, leading to derepression of the SOS regulon and eventually DNA repair. In Serratia proteamaculans (strain 568), this protein is LexA repressor.